We begin with the raw amino-acid sequence, 202 residues long: Molybdenum cofactor guanylyltransferase (202 aa).

GTP contacts are provided by residues 9-11, K22, D70, and D96; that span reads LAG. D96 serves as a coordination point for Mg(2+).

It belongs to the MobA family. In terms of assembly, monomer. Requires Mg(2+) as cofactor.

The protein resides in the cytoplasm. The catalysed reaction is Mo-molybdopterin + GTP + H(+) = Mo-molybdopterin guanine dinucleotide + diphosphate. Transfers a GMP moiety from GTP to Mo-molybdopterin (Mo-MPT) cofactor (Moco or molybdenum cofactor) to form Mo-molybdopterin guanine dinucleotide (Mo-MGD) cofactor. The chain is Molybdenum cofactor guanylyltransferase from Desulfosudis oleivorans (strain DSM 6200 / JCM 39069 / Hxd3) (Desulfococcus oleovorans).